A 503-amino-acid polypeptide reads, in one-letter code: LEM domain-containing protein 2 (503 aa).

At Ala-2 the chain carries N-acetylalanine. Positions 2 to 42 (AGLSDLELRRELQALGFQPGPITDTTRDVYRNKLRRLRGEA) constitute an LEM domain. The span at 42–74 (ARLRDEERLREEARPRGEERLREEARLREDAPL) shows a compositional bias: basic and acidic residues. 2 disordered regions span residues 42–97 (ARLR…SGSA) and 127–157 (AQLRRRASVRGSSEEDEDARTPDRATQGPGL). Residues 74-130 (LRARPAAASPRAEPWLSQPASGSAYATPGAYGDIRPSAASWVGSRGLAYPARPAQLR) form a required for nuclear retention and interaction with LMNA isoform C region. Residues 75-87 (RARPAAASPRAEP) are compositionally biased toward low complexity. Phosphoserine is present on residues Ser-166 and Ser-175. Residues 172–198 (LPSSLLGPDPRPGLRATRAGPAGAARA) are disordered. The segment covering 184-197 (GLRATRAGPAGAAR) has biased composition (low complexity). 2 consecutive transmembrane segments (helical) span residues 213–233 (LLLWASLGLLLVFLGILWVKM) and 377–397 (VTNVLIFFWCLAFLWGLLILL). Residues 395–503 (ILLKYRWRKL…KPSSFSDSER (109 aa)) are winged-Helix (WH). Phosphoserine is present on residues Ser-497, Ser-499, and Ser-501.

In terms of assembly, interacts (via N-terminus) with LMNA isoform C (via C-terminus) (in vitro). Interacts (via LEM domain) with BANF1. Interacts (via C-terminus) with CHMP7. Interacts (via N-terminus) with tubulin; the interaction causes microtubule bundling and stabilization (in vitro). Phosphorylated; strongly phosphorylated in mitosis compared to G1/S. As to expression, ubiquitously expressed, including bone marrow, brain, kidney, colon, skeletal muscle, thymus, testis and uterus.

Its subcellular location is the nucleus inner membrane. The protein resides in the nucleus envelope. It is found in the cytoplasm. The protein localises to the cytoskeleton. It localises to the spindle. Its function is as follows. Nuclear lamina-associated inner nuclear membrane protein that is involved in nuclear structure organization, maintenance of nuclear envelope (NE) integrity and NE reformation after mitosis. Plays a role as transmembrane adapter for the endosomal sorting complexes required for transport (ESCRT), and is thereby involved in ESCRT-mediated NE reformation. Promotes ESCRT-mediated NE closure by recruiting CHMP7 and downstream ESCRT-III proteins IST1/CHMP8 and CHMP2A to the reforming NE during anaphase. During nuclear reassembly, condenses into a liquid-like coating around microtubule spindles and coassembles with CHMP7 to form a macromolecular O-ring seal at the confluence between membranes, chromatin, and the spindle to facilitate early nuclear sealing. Plays a role in the organization of heterochromatin associated with the NE and in the maintenance of NE organization under mechanical stress. Required for embryonic development and involved in regulation of several signaling pathways such as MAPK and AKT. Required for myoblast differentiation involving regulation of ERK signaling. Essential for cardiac homeostasis and proper heart function. This is LEM domain-containing protein 2 (LEMD2) from Homo sapiens (Human).